The chain runs to 147 residues: Antiholin-like protein LrgA (147 aa).

Helical transmembrane passes span P12 to I32, F35 to C55, N74 to S94, and F98 to V118.

It belongs to the CidA/LrgA family. LrgA subfamily.

It is found in the cell membrane. Its function is as follows. Inhibits the expression or activity of extracellular murein hydrolases by interacting, possibly with LrgB, with the holin-like proteins CidA and/or CidB. The LrgAB and CidAB proteins may affect the proton motive force of the membrane. May be involved in programmed cell death (PCD), possibly triggering PCD in response to antibiotics and environmental stresses. The chain is Antiholin-like protein LrgA from Staphylococcus aureus (strain USA300).